The sequence spans 126 residues: Desulfoferrodoxin (126 aa).

C10, C13, C29, C30, H49, H69, H75, C116, and H119 together coordinate Fe cation.

The protein belongs to the desulfoferrodoxin family. Homodimer. Requires Fe(3+) as cofactor. Cu(2+) serves as cofactor.

It catalyses the reaction reduced [rubredoxin] + superoxide + 2 H(+) = oxidized [rubredoxin] + H2O2. In terms of biological role, catalyzes the one-electron reduction of superoxide anion radical to hydrogen peroxide at a nonheme ferrous iron center. Plays a fundamental role in case of oxidative stress via its superoxide detoxification activity. The polypeptide is Desulfoferrodoxin (dfx) (Desulfarculus baarsii (strain ATCC 33931 / DSM 2075 / LMG 7858 / VKM B-1802 / 2st14)).